The chain runs to 717 residues: Cleavage stimulation factor subunit 3 (717 aa).

Ser2 bears the N-acetylserine mark. HAT repeat units follow at residues 45–77 (QPID…AEIK), 79–110 (KNYD…YVRE), 117–152 (SYKE…FLKG), 163–196 (QRIT…YEEG), 221–261 (KEYE…WEKS), 271–303 (LITK…YLEQ), 319–352 (LFSD…YEES), 354–387 (MKYE…FARR), and 458–494 (NEDN…FESN). The interval 683-704 (AVKRPNEDSDEDEEKGAVVPPV) is disordered. Phosphoserine is present on Ser691.

As to quaternary structure, homodimer. The CSTF complex is composed of CSTF1 (50 kDa subunit), CSTF2 (64 kDa subunit) and CSTF3 (77 kDa subunit). CSTF3 directly interacts with CSTF1 and CSTF2. Interacts with FIP1L1.

The protein resides in the nucleus. One of the multiple factors required for polyadenylation and 3'-end cleavage of mammalian pre-mRNAs. In Mus musculus (Mouse), this protein is Cleavage stimulation factor subunit 3 (Cstf3).